Here is a 488-residue protein sequence, read N- to C-terminus: 3-octaprenyl-4-hydroxybenzoate carboxy-lyase (488 aa).

N172 is a binding site for Mn(2+). Residues 175 to 177 (IYR), 189 to 191 (RWL), and 194 to 195 (RG) contribute to the prenylated FMN site. Position 238 (E238) interacts with Mn(2+). Residue D287 is the Proton donor of the active site.

This sequence belongs to the UbiD family. Homohexamer. Requires prenylated FMN as cofactor. Mn(2+) serves as cofactor.

The protein localises to the cell membrane. The catalysed reaction is a 4-hydroxy-3-(all-trans-polyprenyl)benzoate + H(+) = a 2-(all-trans-polyprenyl)phenol + CO2. Its pathway is cofactor biosynthesis; ubiquinone biosynthesis. Functionally, catalyzes the decarboxylation of 3-octaprenyl-4-hydroxy benzoate to 2-octaprenylphenol, an intermediate step in ubiquinone biosynthesis. This is 3-octaprenyl-4-hydroxybenzoate carboxy-lyase from Azotobacter vinelandii (strain DJ / ATCC BAA-1303).